A 320-amino-acid chain; its full sequence is Heterogeneous nuclear ribonucleoprotein A1-like 2 (320 aa).

Residues 4-94 form a globular A domain region; it reads SASPKEPEQL…EPKRAVSRED (91 aa). Ser6 and Ser22 each carry phosphoserine. RRM domains follow at residues 14–97 and 105–184; these read RKLF…DSQR and KKIF…LPKQ. The tract at residues 95-185 is globular B domain; sequence SQRPGAHLTV…EVRKALPKQE (91 aa). Positions 181–216 are disordered; it reads LPKQEMASASSSQRGRRGSGNFGGGRGDGFGGNDNF. Asymmetric dimethylarginine; alternate occurs at positions 194, 206, 218, and 225. Residues Arg194, Arg206, Arg218, and Arg225 each carry the omega-N-methylarginine; alternate modification. Over residues 198–216 the composition is skewed to gly residues; it reads GSGNFGGGRGDGFGGNDNF. Residues 218–240 form an RNA-binding RGG-box region; the sequence is RGGNFSGRGGFGGSCGGGGYGGS. A nuclear targeting sequence region spans residues 268 to 305; it reads NQSSNFGPMKGGNFGGRSSGPYGGGGQYFAKPQNQGGY. The disordered stretch occupies residues 271–320; the sequence is SNFGPMKGGNFGGRSSGPYGGGGQYFAKPQNQGGYGVSSSSSSYGSGRRF. Positions 276-294 are enriched in gly residues; the sequence is MKGGNFGGRSSGPYGGGGQ. At Arg284 the chain carries Omega-N-methylarginine. Lys298 bears the N6-acetyllysine mark. The span at 307–320 shows a compositional bias: low complexity; the sequence is VSSSSSSYGSGRRF.

It is found in the nucleus. Its subcellular location is the cytoplasm. In terms of biological role, involved in the packaging of pre-mRNA into hnRNP particles, transport of poly(A) mRNA from the nucleus to the cytoplasm and may modulate splice site selection. The protein is Heterogeneous nuclear ribonucleoprotein A1-like 2 (HNRNPA1L2) of Homo sapiens (Human).